The primary structure comprises 291 residues: Protein SpdB (291 aa).

3 helical membrane passes run 24-44 (VVVI…LVVG), 71-91 (ITGV…AHAL), and 99-119 (WLAV…HGLW).

Its subcellular location is the cell membrane. Involved in plasmid transfer. This is Protein SpdB (spdB) from Streptomyces lividans.